The chain runs to 81 residues: Large ribosomal subunit protein bL31B (81 aa).

It belongs to the bacterial ribosomal protein bL31 family. Type B subfamily. Part of the 50S ribosomal subunit.

This Exiguobacterium sibiricum (strain DSM 17290 / CCUG 55495 / CIP 109462 / JCM 13490 / 255-15) protein is Large ribosomal subunit protein bL31B.